The following is an 894-amino-acid chain: Valine--tRNA ligase (894 aa).

Residues 48–58 carry the 'HIGH' region motif; that stretch reads PNVTGFLHMGH. The 'KMSKS' region motif lies at 527–531; the sequence is KMSKS. Lys-530 serves as a coordination point for ATP. The stretch at 827–852 forms a coiled coil; the sequence is LVDFDEEVKRINKSIEKLTRDIGMLS.

This sequence belongs to the class-I aminoacyl-tRNA synthetase family. ValS type 1 subfamily. In terms of assembly, monomer.

Its subcellular location is the cytoplasm. It carries out the reaction tRNA(Val) + L-valine + ATP = L-valyl-tRNA(Val) + AMP + diphosphate. Functionally, catalyzes the attachment of valine to tRNA(Val). As ValRS can inadvertently accommodate and process structurally similar amino acids such as threonine, to avoid such errors, it has a 'posttransfer' editing activity that hydrolyzes mischarged Thr-tRNA(Val) in a tRNA-dependent manner. The chain is Valine--tRNA ligase from Bdellovibrio bacteriovorus (strain ATCC 15356 / DSM 50701 / NCIMB 9529 / HD100).